Here is a 250-residue protein sequence, read N- to C-terminus: 3-deoxy-manno-octulosonate cytidylyltransferase (250 aa).

This sequence belongs to the KdsB family.

It is found in the cytoplasm. The enzyme catalyses 3-deoxy-alpha-D-manno-oct-2-ulosonate + CTP = CMP-3-deoxy-beta-D-manno-octulosonate + diphosphate. It participates in nucleotide-sugar biosynthesis; CMP-3-deoxy-D-manno-octulosonate biosynthesis; CMP-3-deoxy-D-manno-octulosonate from 3-deoxy-D-manno-octulosonate and CTP: step 1/1. Its pathway is bacterial outer membrane biogenesis; lipopolysaccharide biosynthesis. In terms of biological role, activates KDO (a required 8-carbon sugar) for incorporation into bacterial lipopolysaccharide in Gram-negative bacteria. This chain is 3-deoxy-manno-octulosonate cytidylyltransferase, found in Syntrophotalea carbinolica (strain DSM 2380 / NBRC 103641 / GraBd1) (Pelobacter carbinolicus).